The following is a 629-amino-acid chain: Solute carrier family 22 member 14 (629 aa).

Residues methionine 1–arginine 21 form a disordered region. Over methionine 1–arginine 67 the chain is Cytoplasmic. A compositionally biased stretch (polar residues) spans tyrosine 7–serine 16. The helical transmembrane segment at leucine 68 to phenylalanine 88 threads the bilayer. Topologically, residues leucine 89–glutamate 183 are extracellular. N-linked (GlcNAc...) asparagine glycans are attached at residues asparagine 98, asparagine 116, asparagine 124, and asparagine 149. The helical transmembrane segment at asparagine 184–serine 204 threads the bilayer. Over aspartate 205 to arginine 209 the chain is Cytoplasmic. The chain crosses the membrane as a helical span at residues tyrosine 210–valine 230. Topologically, residues serine 231–arginine 240 are extracellular. The chain crosses the membrane as a helical span at residues phenylalanine 241–tryptophan 261. Residues leucine 262–glutamine 269 lie on the Cytoplasmic side of the membrane. A helical membrane pass occupies residues alanine 270–tyrosine 290. The Extracellular segment spans residues lysine 291–tryptophan 295. Residues arginine 296 to leucine 316 form a helical membrane-spanning segment. Residues arginine 317–lysine 378 lie on the Cytoplasmic side of the membrane. A helical membrane pass occupies residues valine 379–leucine 399. The Extracellular portion of the chain corresponds to lysine 400–tyrosine 409. Residues phenylalanine 410–leucine 430 traverse the membrane as a helical segment. Topologically, residues glutamate 431 to lysine 436 are cytoplasmic. The helical transmembrane segment at tryptophan 437–proline 457 threads the bilayer. The Extracellular segment spans residues glutamine 458–threonine 463. The helical transmembrane segment at isoleucine 464 to isoleucine 484 threads the bilayer. Topologically, residues tyrosine 485–serine 496 are cytoplasmic. A helical transmembrane segment spans residues threonine 497–phenylalanine 517. The Extracellular segment spans residues lysine 518–glutamine 523. A helical membrane pass occupies residues leucine 524–proline 544. Over glutamate 545–proline 629 the chain is Cytoplasmic.

Belongs to the major facilitator (TC 2.A.1) superfamily. Organic cation transporter (TC 2.A.1.19) family. Testis-specific (at protein level). Specifically expressed in male germ cells (at protein level).

It localises to the mitochondrion inner membrane. It is found in the cell projection. The protein resides in the cilium. The protein localises to the flagellum membrane. The enzyme catalyses riboflavin(in) = riboflavin(out). In terms of biological role, riboflavin transporter localized at the inner mitochondrial membrane of the spermatozoa midpiece, which is required for male fertility. SLC22A14-mediated riboflavin transport is essential for spermatozoa energy generation and motility: riboflavin is the precursor of FMN and FAD, which are coenzymes of many enzymes in the TCA cycle (the citric acid cycle) in mitochondria. Required for sperm motility and normal sperm flagellar structure. This Mus musculus (Mouse) protein is Solute carrier family 22 member 14.